Reading from the N-terminus, the 822-residue chain is Molybdenum cofactor sulfurase (822 aa).

Position 239 is an N6-(pyridoxal phosphate)lysine (K239). C401 is an active-site residue. The tract at residues 633–666 (TRISNPTRSSRRSQRALMPGSFPEDPSPTSEQPP) is disordered. In terms of domain architecture, MOSC spans 643 to 820 (RRSQRALMPG…VMVGDVVTPQ (178 aa)).

It belongs to the class-V pyridoxal-phosphate-dependent aminotransferase family. MOCOS subfamily. Requires pyridoxal 5'-phosphate as cofactor.

The catalysed reaction is Mo-molybdopterin + L-cysteine + AH2 = thio-Mo-molybdopterin + L-alanine + A + H2O. Its pathway is cofactor biosynthesis; molybdopterin biosynthesis. Sulfurates the molybdenum cofactor. Sulfation of molybdenum is essential for xanthine dehydrogenase (XDH) and aldehyde oxidase (ADO) enzymes in which molybdenum cofactor is liganded by 1 oxygen and 1 sulfur atom in active form. This is Molybdenum cofactor sulfurase from Aspergillus oryzae (strain ATCC 42149 / RIB 40) (Yellow koji mold).